The primary structure comprises 181 residues: MSRPAHKRPEYHKINKDLFVLTYGALVAQLCKDYEKDEDVNKYLDKMGYNIGTRLVEDFLARSCVRRCHSYSEIINIIAQVAFKMYLGITPSVTCHNSSRNEFSLILHKNPLAEFVEELPAGRSALCYCNLLCGIIRGALEMVHLAANVTFLQDRLKGDSVTEIGITFLKKLDEKKYRRKK.

The S-palmitoyl cysteine moiety is linked to residue Cys-68.

It belongs to the TRAPP small subunits family. BET3 subfamily. As to quaternary structure, homodimer. Component of the multisubunit TRAPP (transport protein particle) complex, which includes at least TRAPPC2, TRAPPC2L, TRAPPC3, TRAPPC3L, TRAPPC4, TRAPPC5, TRAPPC8, TRAPPC9, TRAPPC10, TRAPPC11 and TRAPPC12.

The protein localises to the golgi apparatus. Its subcellular location is the cis-Golgi network. The protein resides in the endoplasmic reticulum. In terms of biological role, may play a role in vesicular transport from endoplasmic reticulum to Golgi. This Mus musculus (Mouse) protein is Trafficking protein particle complex subunit 3-like protein (Trappc3l).